We begin with the raw amino-acid sequence, 1122 residues long: AP-4 complex subunit epsilon-1 (1122 aa).

Serine 699 is modified (phosphoserine). Basic and acidic residues-rich tracts occupy residues 714-728 (YLPK…KPEA) and 745-760 (TTRK…STEE). 2 disordered regions span residues 714–760 (YLPK…STEE) and 797–861 (SKLK…AEKL). An interaction with TEPSIN region spans residues 726–1122 (PEASHVPAEG…CHCQKVMQTS (397 aa)). A compositionally biased stretch (low complexity) spans 841-853 (ELSSELFRSESLS). Serine 851 carries the phosphoserine modification.

This sequence belongs to the adaptor complexes large subunit family. Adaptor protein complex 4 (AP-4) is a heterotetramer composed of two large adaptins (epsilon-type subunit AP4E1 and beta-type subunit AP4B1), a medium adaptin (mu-type subunit AP4M1) and a small adaptin (sigma-type AP4S1). Interacts with TEPSIN. Interacts with GRIA2; probably indirect it mediates the somatodendritic localization of GRIA2 in neurons.

It is found in the golgi apparatus. The protein localises to the trans-Golgi network membrane. In terms of biological role, component of the adaptor protein complex 4 (AP-4). Adaptor protein complexes are vesicle coat components involved both in vesicle formation and cargo selection. They control the vesicular transport of proteins in different trafficking pathways. AP-4 forms a non clathrin-associated coat on vesicles departing the trans-Golgi network (TGN) and may be involved in the targeting of proteins from the trans-Golgi network (TGN) to the endosomal-lysosomal system. It is also involved in protein sorting to the basolateral membrane in epithelial cells and the proper asymmetric localization of somatodendritic proteins in neurons. AP-4 is involved in the recognition and binding of tyrosine-based sorting signals found in the cytoplasmic part of cargos, but may also recognize other types of sorting signal. The sequence is that of AP-4 complex subunit epsilon-1 from Mus musculus (Mouse).